We begin with the raw amino-acid sequence, 785 residues long: Endonuclease MutS2 (785 aa).

335–342 is an ATP binding site; it reads GPNTGGKT. A Smr domain is found at 710–785; the sequence is LDLRGERYEE…GLGNTVVELR (76 aa). The interval 764 to 785 is disordered; sequence VKSARDGGANEGGLGNTVVELR.

Belongs to the DNA mismatch repair MutS family. MutS2 subfamily. As to quaternary structure, homodimer. Binds to stalled ribosomes, contacting rRNA.

Endonuclease that is involved in the suppression of homologous recombination and thus may have a key role in the control of bacterial genetic diversity. Its function is as follows. Acts as a ribosome collision sensor, splitting the ribosome into its 2 subunits. Detects stalled/collided 70S ribosomes which it binds and splits by an ATP-hydrolysis driven conformational change. Acts upstream of the ribosome quality control system (RQC), a ribosome-associated complex that mediates the extraction of incompletely synthesized nascent chains from stalled ribosomes and their subsequent degradation. Probably generates substrates for RQC. This Halalkalibacterium halodurans (strain ATCC BAA-125 / DSM 18197 / FERM 7344 / JCM 9153 / C-125) (Bacillus halodurans) protein is Endonuclease MutS2.